A 363-amino-acid chain; its full sequence is MKKSINEIADFLGGKVVGDGGILIKAVRGIDEAGPGDITFVANPQYEKKLNETGASAVLVTRDTERPGENVTLIQVDDPYVSLGKLLTIFYPEEREKPGISAQAIVEEGAEISPSATVYPGVYISSGAGIGAGVVLYPGVFVGRDAVIGENSILYPNVCVYRRCLIGKRVILHAGAVVGSDGFGFANPGRDNIKIPQIGIVQIDDDVEIGANTTIDRATLGRTWIQRGVKIDNLVQIAHNVVIGEKSIIVSQVGISGSTRLGRSVILGGQAGLVGHLQIGDFAMVGAQSGVHEDVPANSVVSGSPCQPHRNWLRSMSCLPRLPDMRHLLNDLRKRIETLEKLSEMKKEVEKEKESSREKEETK.

The active-site Proton acceptor is the His-239. The disordered stretch occupies residues 342–363 (LSEMKKEVEKEKESSREKEETK).

It belongs to the transferase hexapeptide repeat family. LpxD subfamily. Homotrimer.

It carries out the reaction a UDP-3-O-[(3R)-3-hydroxyacyl]-alpha-D-glucosamine + a (3R)-hydroxyacyl-[ACP] = a UDP-2-N,3-O-bis[(3R)-3-hydroxyacyl]-alpha-D-glucosamine + holo-[ACP] + H(+). It functions in the pathway bacterial outer membrane biogenesis; LPS lipid A biosynthesis. Its function is as follows. Catalyzes the N-acylation of UDP-3-O-acylglucosamine using 3-hydroxyacyl-ACP as the acyl donor. Is involved in the biosynthesis of lipid A, a phosphorylated glycolipid that anchors the lipopolysaccharide to the outer membrane of the cell. This is UDP-3-O-acylglucosamine N-acyltransferase from Syntrophus aciditrophicus (strain SB).